The chain runs to 994 residues: Phosphoenolpyruvate carboxylase (994 aa).

The interval 1 to 66 (MKSSGSARAT…QGRTREDKDR (66 aa)) is disordered. Composition is skewed to low complexity over residues 14-25 (AVSSSSAPAHAE) and 41-54 (AAARPLAPTNAASA). Residues histidine 204 and lysine 646 contribute to the active site.

This sequence belongs to the PEPCase type 1 family. Mg(2+) serves as cofactor.

The catalysed reaction is oxaloacetate + phosphate = phosphoenolpyruvate + hydrogencarbonate. Its function is as follows. Forms oxaloacetate, a four-carbon dicarboxylic acid source for the tricarboxylic acid cycle. In Burkholderia pseudomallei (strain 668), this protein is Phosphoenolpyruvate carboxylase.